Reading from the N-terminus, the 405-residue chain is Nicotinate phosphoribosyltransferase (405 aa).

Position 224 is a phosphohistidine; by autocatalysis (His-224).

Belongs to the NAPRTase family. In terms of processing, transiently phosphorylated on a His residue during the reaction cycle. Phosphorylation strongly increases the affinity for substrates and increases the rate of nicotinate D-ribonucleotide production. Dephosphorylation regenerates the low-affinity form of the enzyme, leading to product release.

The enzyme catalyses nicotinate + 5-phospho-alpha-D-ribose 1-diphosphate + ATP + H2O = nicotinate beta-D-ribonucleotide + ADP + phosphate + diphosphate. It participates in cofactor biosynthesis; NAD(+) biosynthesis; nicotinate D-ribonucleotide from nicotinate: step 1/1. Its function is as follows. Catalyzes the synthesis of beta-nicotinate D-ribonucleotide from nicotinate and 5-phospho-D-ribose 1-phosphate at the expense of ATP. The protein is Nicotinate phosphoribosyltransferase of Methanococcoides burtonii (strain DSM 6242 / NBRC 107633 / OCM 468 / ACE-M).